The primary structure comprises 444 residues: Light-independent protochlorophyllide reductase subunit N (444 aa).

Residues Cys-36, Cys-61, and Cys-118 each contribute to the [4Fe-4S] cluster site.

It belongs to the BchN/ChlN family. In terms of assembly, protochlorophyllide reductase is composed of three subunits; BchL, BchN and BchB. Forms a heterotetramer of two BchB and two BchN subunits. [4Fe-4S] cluster serves as cofactor.

The enzyme catalyses chlorophyllide a + oxidized 2[4Fe-4S]-[ferredoxin] + 2 ADP + 2 phosphate = protochlorophyllide a + reduced 2[4Fe-4S]-[ferredoxin] + 2 ATP + 2 H2O. It functions in the pathway porphyrin-containing compound metabolism; bacteriochlorophyll biosynthesis (light-independent). Its function is as follows. Component of the dark-operative protochlorophyllide reductase (DPOR) that uses Mg-ATP and reduced ferredoxin to reduce ring D of protochlorophyllide (Pchlide) to form chlorophyllide a (Chlide). This reaction is light-independent. The NB-protein (BchN-BchB) is the catalytic component of the complex. The sequence is that of Light-independent protochlorophyllide reductase subunit N from Chloroflexus aurantiacus (strain ATCC 29366 / DSM 635 / J-10-fl).